Here is a 551-residue protein sequence, read N- to C-terminus: Hydroxylamine reductase (551 aa).

[2Fe-2S] cluster is bound by residues Cys3, Cys6, Cys18, and Cys25. 8 residues coordinate hybrid [4Fe-2O-2S] cluster: His249, Glu273, Cys317, Cys405, Cys433, Cys459, Glu493, and Lys495. Cysteine persulfide is present on Cys405.

This sequence belongs to the HCP family. Requires [2Fe-2S] cluster as cofactor. Hybrid [4Fe-2O-2S] cluster is required as a cofactor.

The protein localises to the cytoplasm. The catalysed reaction is A + NH4(+) + H2O = hydroxylamine + AH2 + H(+). Catalyzes the reduction of hydroxylamine to form NH(3) and H(2)O. This is Hydroxylamine reductase from Actinobacillus pleuropneumoniae serotype 5b (strain L20).